The chain runs to 133 residues: MERTFVALKPDTVERKLVGRVIQRFEDRGFEIVEMRMLTLTMEMAEEYYGEHKGKEFYERLIKFMTSGRIVAMVIKGERAISTVRKMLGNTCPCDAEPGTIRGDFGLYTPANIIHASDSLESAEREIDLFFGR.

Lys-9, Phe-57, Arg-85, Thr-91, Arg-102, and Asn-112 together coordinate ATP. The active-site Pros-phosphohistidine intermediate is the His-115.

Belongs to the NDK family. Mg(2+) is required as a cofactor.

It is found in the cytoplasm. It catalyses the reaction a 2'-deoxyribonucleoside 5'-diphosphate + ATP = a 2'-deoxyribonucleoside 5'-triphosphate + ADP. It carries out the reaction a ribonucleoside 5'-diphosphate + ATP = a ribonucleoside 5'-triphosphate + ADP. Major role in the synthesis of nucleoside triphosphates other than ATP. The ATP gamma phosphate is transferred to the NDP beta phosphate via a ping-pong mechanism, using a phosphorylated active-site intermediate. This Methanococcus maripaludis (strain DSM 14266 / JCM 13030 / NBRC 101832 / S2 / LL) protein is Nucleoside diphosphate kinase.